The chain runs to 220 residues: Large ribosomal subunit protein eL15 (220 aa).

The segment covering 197–207 (KKRHEASRGAR) has biased composition (basic and acidic residues). A disordered region spans residues 197–220 (KKRHEASRGARDPWQIAEKLKEEK).

The protein belongs to the eukaryotic ribosomal protein eL15 family.

The chain is Large ribosomal subunit protein eL15 from Desulfurococcus amylolyticus (strain DSM 18924 / JCM 16383 / VKM B-2413 / 1221n) (Desulfurococcus kamchatkensis).